The following is a 301-amino-acid chain: Light-independent protochlorophyllide reductase iron-sulfur ATP-binding protein (301 aa).

Low complexity predominate over residues 1–13 (MNVTLRPPLAAAP). The tract at residues 1–22 (MNVTLRPPLAAAPRRPDGAGSV) is disordered. Residues 45–50 (GIGKST) and Lys-74 each bind ATP. Ser-49 lines the Mg(2+) pocket. [4Fe-4S] cluster contacts are provided by Cys-130 and Cys-164. Residues 215 to 216 (NR) and 239 to 241 (PDL) each bind ATP.

Belongs to the NifH/BchL/ChlL family. In terms of assembly, homodimer. Protochlorophyllide reductase is composed of three subunits; BchL, BchN and BchB. The cofactor is [4Fe-4S] cluster.

It catalyses the reaction chlorophyllide a + oxidized 2[4Fe-4S]-[ferredoxin] + 2 ADP + 2 phosphate = protochlorophyllide a + reduced 2[4Fe-4S]-[ferredoxin] + 2 ATP + 2 H2O. It functions in the pathway porphyrin-containing compound metabolism; bacteriochlorophyll biosynthesis (light-independent). In terms of biological role, component of the dark-operative protochlorophyllide reductase (DPOR) that uses Mg-ATP and reduced ferredoxin to reduce ring D of protochlorophyllide (Pchlide) to form chlorophyllide a (Chlide). This reaction is light-independent. The L component serves as a unique electron donor to the NB-component of the complex, and binds Mg-ATP. The protein is Light-independent protochlorophyllide reductase iron-sulfur ATP-binding protein of Bradyrhizobium sp. (strain ORS 278).